The chain runs to 227 residues: DNA repair protein RecO (227 aa).

Belongs to the RecO family.

Functionally, involved in DNA repair and RecF pathway recombination. The sequence is that of DNA repair protein RecO from Pseudomonas putida (strain ATCC 47054 / DSM 6125 / CFBP 8728 / NCIMB 11950 / KT2440).